A 214-amino-acid chain; its full sequence is LOB domain-containing protein 7 (214 aa).

Residues 12-113 (TACAACKHQR…TELNLTRQQI (102 aa)) form the LOB domain.

It belongs to the LOB domain-containing protein family.

In Arabidopsis thaliana (Mouse-ear cress), this protein is LOB domain-containing protein 7 (LBD7).